Here is an 811-residue protein sequence, read N- to C-terminus: Transmembrane protease serine 6 (811 aa).

The interval 1–48 is disordered; that stretch reads MPRCFQLPCSTRMPTTEVPQAADGQGDAGDGEEAAEPEGKFKPPKNTK. Residues 1-59 are Cytoplasmic-facing; that stretch reads MPRCFQLPCSTRMPTTEVPQAADGQGDAGDGEEAAEPEGKFKPPKNTKRKNRDYVRFTP. Over residues 8–18 the composition is skewed to polar residues; sequence PCSTRMPTTEV. A helical; Signal-anchor for type II membrane protein transmembrane segment spans residues 60–80; the sequence is LLLVLAALVSAGVMLWYFLGY. Residues 81–811 lie on the Extracellular side of the membrane; sequence KAEVTVSQVY…VINWIQQVLT (731 aa). One can recognise an SEA domain in the interval 86–209; sequence VSQVYSGSLR…EGLVILEASV (124 aa). 6 N-linked (GlcNAc...) asparagine glycosylation sites follow: N138, N184, N216, N338, N433, and N453. 2 CUB domains span residues 213 to 336 and 323 to 440; these read VVLN…QDCQ and FLLS…QISL. C335 and C366 are disulfide-bonded. LDL-receptor class A domains follow at residues 445-477, 478-514, and 518-555; these read VQVYYSLYNQSDPCPGEFLCSVNGLCVPACDGI, KDCPNGLDERNCVCRAMFQCQEDSTCISLPRVCDRQP, and NGSDEEQCQEGVPCGTFTFQCEDRSCVKKPNPECDGQS. Cystine bridges form between C458/C470, C464/C480, C474/C489, C491/C503, C497/C516, C510/C525, C531/C543, C538/C557, C551/C566, and C602/C618. N518 is a glycosylation site (N-linked (GlcNAc...) asparagine). The Peptidase S1 domain maps to 577 to 811; sequence IVGGTVSSEG…VINWIQQVLT (235 aa). Active-site charge relay system residues include H617 and D668. 3 cysteine pairs are disulfide-bonded: C702–C768, C733–C747, and C758–C787. Catalysis depends on S762, which acts as the Charge relay system.

Belongs to the peptidase S1 family. As to quaternary structure, interacts with HJV. The single-chain zymogen undergoes autoproteolytic processing. This results in TMPRSS6 shedding from the cell surface and conversion into an activated two-chains form which is released extracellularly. The process involves a trans-activation mechanism that requires TMPRSS6 oligomerization. In terms of tissue distribution, expressed at highest levels in adult mice liver, kidney and uterus. Also strongly expressed within the nasal cavity by olfactory epithelial cells. A weak, but detectable, signal in adult mice tissues analyzed including brain, lung, heart, kidney, spleen, muscle, intestine, thymus and pancreas. No signal in residual embryonic yolk sac, developing kidney tubules or in embryonic tissues analyzed including lung, heart, gastrointestinal tract and epithelium of the oral cavity.

Its subcellular location is the cell membrane. Functionally, membrane-bound serine protease. Through the cleavage of cell surface HJV, a regulator of the expression of the iron absorption-regulating hormone hepicidin/HAMP, plays a role in iron homeostasis. The sequence is that of Transmembrane protease serine 6 (Tmprss6) from Mus musculus (Mouse).